Here is a 173-residue protein sequence, read N- to C-terminus: Adenine phosphoribosyltransferase (173 aa).

This sequence belongs to the purine/pyrimidine phosphoribosyltransferase family. In terms of assembly, homodimer.

Its subcellular location is the cytoplasm. It catalyses the reaction AMP + diphosphate = 5-phospho-alpha-D-ribose 1-diphosphate + adenine. The protein operates within purine metabolism; AMP biosynthesis via salvage pathway; AMP from adenine: step 1/1. Its function is as follows. Catalyzes a salvage reaction resulting in the formation of AMP, that is energically less costly than de novo synthesis. This Desulfosudis oleivorans (strain DSM 6200 / JCM 39069 / Hxd3) (Desulfococcus oleovorans) protein is Adenine phosphoribosyltransferase.